Reading from the N-terminus, the 429-residue chain is D-galactonate dehydratase family member Caci_4410 (429 aa).

The tract at residues 1–22 (MTDANHLLDPSGALPQTRPPWT) is disordered. Mg(2+) is bound at residue Asp-233. Residue His-235 participates in D-arabinonate binding. Mg(2+) contacts are provided by Glu-259 and Glu-285. 4 residues coordinate D-arabinonate: Glu-285, Arg-306, His-335, and Glu-362.

Belongs to the mandelate racemase/muconate lactonizing enzyme family. GalD subfamily.

Its function is as follows. Has no detectable activity with D-mannonate and with a panel of 70 other acid sugars (in vitro), in spite of the conservation of the residues that are expected to be important for catalytic activity and cofactor binding. May have evolved a divergent function. This chain is D-galactonate dehydratase family member Caci_4410, found in Catenulispora acidiphila (strain DSM 44928 / JCM 14897 / NBRC 102108 / NRRL B-24433 / ID139908).